The following is a 293-amino-acid chain: Thiamine-monophosphate kinase (293 aa).

5 residues coordinate Mg(2+): glutamate 25, valine 39, aspartate 40, aspartate 68, and aspartate 113. ATP is bound by residues 112 to 113 (GD) and arginine 136. A Mg(2+)-binding site is contributed by aspartate 194. Residue serine 196 participates in ATP binding. Residue aspartate 197 participates in Mg(2+) binding. Residues glutamate 243 and tryptophan 286 each contribute to the substrate site.

It belongs to the thiamine-monophosphate kinase family. Homodimer.

It carries out the reaction thiamine phosphate + ATP = thiamine diphosphate + ADP. It functions in the pathway cofactor biosynthesis; thiamine diphosphate biosynthesis; thiamine diphosphate from thiamine phosphate: step 1/1. With respect to regulation, is inhibited by AMP; the mode of AMP inhibition is uncompetitive for both TMP and ATP. Functionally, catalyzes the ATP-dependent phosphorylation of thiamine-monophosphate (TMP) to form thiamine-pyrophosphate (TPP), the active form of vitamin B1. This is Thiamine-monophosphate kinase from Pyrobaculum calidifontis (strain DSM 21063 / JCM 11548 / VA1).